The primary structure comprises 412 residues: Phosphate-repressible acid phosphatase (412 aa).

The signal sequence occupies residues 1–19 (MLTKQTLLAFVGALALATG). Residues Asn74, Asn121, Asn186, and Asn208 are each glycosylated (N-linked (GlcNAc...) asparagine). Asp215 functions as the Proton donor in the catalytic mechanism. 3 N-linked (GlcNAc...) asparagine glycosylation sites follow: Asn217, Asn332, and Asn343.

In terms of processing, the N-terminus is blocked.

The protein resides in the secreted. The enzyme catalyses a phosphate monoester + H2O = an alcohol + phosphate. This is Phosphate-repressible acid phosphatase (PHOA) from Penicillium chrysogenum (Penicillium notatum).